Here is a 193-residue protein sequence, read N- to C-terminus: Xanthine phosphoribosyltransferase (193 aa).

Residues Leu20 and Asn27 each contribute to the xanthine site. 128-132 (ANGDA) is a 5-phospho-alpha-D-ribose 1-diphosphate binding site. Lys156 contacts xanthine.

Belongs to the purine/pyrimidine phosphoribosyltransferase family. Xpt subfamily. As to quaternary structure, homodimer.

The protein resides in the cytoplasm. It catalyses the reaction XMP + diphosphate = xanthine + 5-phospho-alpha-D-ribose 1-diphosphate. Its pathway is purine metabolism; XMP biosynthesis via salvage pathway; XMP from xanthine: step 1/1. Functionally, converts the preformed base xanthine, a product of nucleic acid breakdown, to xanthosine 5'-monophosphate (XMP), so it can be reused for RNA or DNA synthesis. The chain is Xanthine phosphoribosyltransferase from Staphylococcus haemolyticus (strain JCSC1435).